Here is a 373-residue protein sequence, read N- to C-terminus: Melanoma-associated antigen C2 (373 aa).

The segment at Met-1–Ser-102 is disordered. Positions Ser-40–Ser-60 are enriched in low complexity. Over residues Ser-85–Gly-94 the composition is skewed to pro residues. The tract at residues Ser-135 to Glu-373 is interaction with TRIM28. Residues Leu-141–Ala-336 enclose the MAGE domain.

Interacts with TRIM28 and UBE2H. In terms of tissue distribution, not expressed in normal tissues, except in germ cells in the seminiferous tubules and in Purkinje cells of the cerebellum. Expressed in various tumors, including melanoma, lymphoma, as well as pancreatic cancer, mammary gland cancer, non-small cell lung cancer and liver cancer. In hepatocellular carcinoma, there is an inverse correlation between tumor differentiation and protein expression, i.e. the lower the differentiation, the higher percentage of expression.

The protein resides in the cytoplasm. It is found in the nucleus. Its function is as follows. Proposed to enhance ubiquitin ligase activity of RING-type zinc finger-containing E3 ubiquitin-protein ligases. In vitro enhances ubiquitin ligase activity of TRIM28 and stimulates p53/TP53 ubiquitination in presence of Ubl-conjugating enzyme UBE2H leading to p53/TP53 degradation. Proposed to act through recruitment and/or stabilization of the Ubl-conjugating enzymes (E2) at the E3:substrate complex. The protein is Melanoma-associated antigen C2 (MAGEC2) of Homo sapiens (Human).